The sequence spans 935 residues: Progesterone receptor (935 aa).

Positions 1-49 (MTELKAKGXRAPHVAGSPSSPKVXSPLPCRQAAXPFPGSQTSDTLPEVS) are disordered. Residues 1–164 (MTELKAKGXR…SATQRVLSRL (164 aa)) are AF3; mediates transcriptional activation. The modulating, Pro-Rich stretch occupies residues 1-568 (MTELKAKGXR…YSFESLPQKI (568 aa)). Residues 17–28 (SPSSPKVXSPLP) are compositionally biased toward low complexity. Phosphoserine is present on Ser20. Positions 55–59 (LDGLL) match the LXXL motif 1 motif. Residues 61 to 255 (PRICQGQDPP…GAAAGGGAAA (195 aa)) form a disordered region. At Ser81 the chain carries Phosphoserine. The LXXL motif 2 motif lies at 115–119 (LDTLW). A phosphoserine mark is found at Ser130 and Ser162. Positions 165–305 (MSRSGGKAGD…LATTVTDFIH (141 aa)) are mediates transcriptional transrepression. The short motif at 183-187 (KVLPR) is the Nuclear localization signal element. Residue Ser190 is modified to Phosphoserine. A compositionally biased stretch (polar residues) spans 191–203 (PSRQLLLPTTGSP). At Ser213 the chain carries Phosphoserine. The span at 220-231 (EVEEEDGSESED) shows a compositional bias: acidic residues. Over residues 232–246 (SAGPLLKGKPRALGG) the composition is skewed to low complexity. Ser294 is subject to Phosphoserine; by MAPK1. The interval 331-365 (GGAGAASAFAPPRSSPSASSTPVPGGDFPDCAYAP) is disordered. Residues 335 to 356 (AASAFAPPRSSPSASSTPVPGG) are compositionally biased toward low complexity. Ser345 is modified (phosphoserine; by MAPK). Residue Lys388 forms a Glycyl lysine isopeptide (Lys-Gly) (interchain with G-Cter in SUMO); alternate linkage. Lys388 is covalently cross-linked (Glycyl lysine isopeptide (Lys-Gly) (interchain with G-Cter in ubiquitin); alternate). Position 400 is a phosphoserine; by CDK2 (Ser400). A disordered region spans residues 415–452 (PDFPLGPPPPLPPRAPPSRPGEAAVTAAPASASVSSAS). Positions 418-433 (PLGPPPPLPPRAPPSR) are enriched in pro residues. The span at 434–452 (PGEAAVTAAPASASVSSAS) shows a compositional bias: low complexity. An AF1; mediates transcriptional activation region spans residues 456–548 (STLECILYKA…VYPPYLNYLR (93 aa)). Lys533 participates in a covalent cross-link: Glycyl lysine isopeptide (Lys-Gly) (interchain with G-Cter in SUMO). 2 consecutive NR C4-type zinc fingers follow at residues 569 to 589 (CLIC…CGSC) and 605 to 629 (CAGR…LRKC). The segment at residues 569–641 (CLICGDEASG…AGMVLGGRKF (73 aa)) is a DNA-binding region (nuclear receptor). Residue Ser678 is modified to Phosphoserine. The NR LBD domain occupies 681-915 (QDIQLIPPLI…EFPEMMSEVI (235 aa)). The interval 689–935 (LINLLLSIEP…MVKPLLFHKK (247 aa)) is AF2; mediates transcriptional activation.

This sequence belongs to the nuclear hormone receptor family. As to quaternary structure, interacts with SMARD1 and UNC45A. Interacts with CUEDC2; the interaction promotes ubiquitination, decreases sumoylation, and represses transcriptional activity. Interacts with PIAS3; the interaction promotes sumoylation of PR in a hormone-dependent manner, inhibits DNA-binding, and alters nuclear export. Interacts with SP1; the interaction requires ligand-induced phosphorylation on Ser-345 by ERK1/2-MAPK. Interacts with PRMT2. Interacts with NCOA2 and NCOA1. Interacts with KLF9. Interacts with GTF2B. In terms of processing, phosphorylated on multiple serine sites. Several of these sites are hormone-dependent. Phosphorylation on Ser-294 is highly hormone-dependent and modulates ubiquitination and sumoylation on Lys-388. Phosphorylation on Ser-345 also requires induction by hormone. Basal phosphorylation on Ser-81, Ser-162, Ser-190 and Ser-400 is increased in response to progesterone and can be phosphorylated in vitro by the CDK2-A1 complex. Increased levels of phosphorylation on Ser-400 also in the presence of EGF, heregulin, IGF, PMA and FBS. Phosphorylation at this site by CDK2 is ligand-independent, and increases nuclear translocation and transcriptional activity. Phosphorylation at Ser-162 and Ser-294, but not at Ser-190, is impaired during the G(2)/M phase of the cell cycle. Phosphorylation on Ser-345 by ERK1/2 MAPK is required for interaction with SP1. Sumoylation is hormone-dependent and represses transcriptional activity. Sumoylation on all three sites is enhanced by PIAS3. Desumoylated by SENP1. Sumoylation on Lys-388, the main site of sumoylation, is repressed by ubiquitination on the same site, and modulated by phosphorylation at Ser-294. Post-translationally, ubiquitination is hormone-dependent and represses sumoylation on the same site. Promoted by MAPK-mediated phosphorylation on Ser-294. In terms of processing, palmitoylated by ZDHHC7 and ZDHHC21. Palmitoylation is required for plasma membrane targeting and for rapid intracellular signaling via ERK and AKT kinases and cAMP generation.

Its subcellular location is the nucleus. The protein localises to the cytoplasm. Its function is as follows. The steroid hormones and their receptors are involved in the regulation of eukaryotic gene expression and affect cellular proliferation and differentiation in target tissues. Transcriptional activator of several progesteron-dependent promoters in a variety of cell types. Involved in activation of SRC-dependent MAPK signaling on hormone stimulation. In Ateles paniscus (Black spider monkey), this protein is Progesterone receptor (PGR).